An 89-amino-acid chain; its full sequence is Large ribosomal subunit protein bL27 (89 aa).

This sequence belongs to the bacterial ribosomal protein bL27 family.

This is Large ribosomal subunit protein bL27 from Cytophaga hutchinsonii (strain ATCC 33406 / DSM 1761 / CIP 103989 / NBRC 15051 / NCIMB 9469 / D465).